A 350-amino-acid polypeptide reads, in one-letter code: Glycolate oxidase subunit GlcE (350 aa).

In terms of domain architecture, FAD-binding PCMH-type spans 1 to 173; that stretch reads MLRECDYSQA…TEISMKVLPR (173 aa).

As to quaternary structure, the glycolate oxidase likely consists of three subunits, GlcD, GlcE and GlcF. FAD serves as cofactor.

It localises to the cell inner membrane. It carries out the reaction glycolate + A = glyoxylate + AH2. The catalysed reaction is (R)-lactate + A = pyruvate + AH2. In vitro the glycolate oxidase activity is inhibited by the sulfhydryl inhibitors CuSO4 and PCMB, by KCN, but not by the metal complexing agent EDTA. Its function is as follows. Component of a complex that catalyzes the oxidation of glycolate to glyoxylate. Is required for E.coli to grow on glycolate as a sole source of carbon. Is also able to oxidize D-lactate ((R)-lactate) with a similar rate. Does not link directly to O(2), and 2,6-dichloroindophenol (DCIP) and phenazine methosulfate (PMS) can act as artificial electron acceptors in vitro, but the physiological molecule that functions as a primary electron acceptor during glycolate oxidation is unknown. This is Glycolate oxidase subunit GlcE from Escherichia coli (strain K12).